A 360-amino-acid chain; its full sequence is Nicotinate-nucleotide--dimethylbenzimidazole phosphoribosyltransferase (360 aa).

The Proton acceptor role is filled by E327.

It belongs to the CobT family.

It carries out the reaction 5,6-dimethylbenzimidazole + nicotinate beta-D-ribonucleotide = alpha-ribazole 5'-phosphate + nicotinate + H(+). It participates in nucleoside biosynthesis; alpha-ribazole biosynthesis; alpha-ribazole from 5,6-dimethylbenzimidazole: step 1/2. Functionally, catalyzes the synthesis of alpha-ribazole-5'-phosphate from nicotinate mononucleotide (NAMN) and 5,6-dimethylbenzimidazole (DMB). This is Nicotinate-nucleotide--dimethylbenzimidazole phosphoribosyltransferase from Shewanella baltica (strain OS185).